The chain runs to 118 residues: MYFICLNDLRFPKNKTELYFPVKKKHEWANSATGKKRRWRKKRRKEAYFSYMGKILKQIHPDFSGRSWVLYALGALNAWQLEWVSLEAFRLSFYNHRRAITGREILGAVKQRSSQKSF.

This sequence belongs to the histone H2B family. As to quaternary structure, the nucleosome is a histone octamer containing two molecules each of H2A, H2B, H3 and H4 assembled in one H3-H4 heterotetramer and two H2A-H2B heterodimers. The octamer wraps approximately 147 bp of DNA. In terms of tissue distribution, expressed in germline. Predominantly expressed in oocytes.

It is found in the nucleus. It localises to the chromosome. Its function is as follows. Core component of nucleosome. Nucleosomes wrap and compact DNA into chromatin, limiting DNA accessibility to the cellular machineries which require DNA as a template. Histones thereby play a central role in transcription regulation, DNA repair, DNA replication and chromosomal stability. DNA accessibility is regulated via a complex set of post-translational modifications of histones, also called histone code, and nucleosome remodeling. This Homo sapiens (Human) protein is Histone H2B.N.